Consider the following 1009-residue polypeptide: Kinesin-like protein KIN-5C (1009 aa).

Positions 12–359 (NVQVLLRCRP…LDYAHRAKNI (348 aa)) constitute a Kinesin motor domain. 98–105 (GQTGTGKT) serves as a coordination point for ATP. A coiled-coil region spans residues 406-526 (YQEESERKVM…NSSLHQKIGR (121 aa)). Disordered regions lie at residues 862–882 (SNEQ…KDVT) and 987–1009 (YESF…SQVN). Basic and acidic residues-rich tracts occupy residues 863 to 882 (NEQH…KDVT) and 987 to 996 (YESFATKETK). Residues 997–1009 (PQQLTRSPLSQVN) are compositionally biased toward polar residues.

The protein belongs to the TRAFAC class myosin-kinesin ATPase superfamily. Kinesin family. KIN-5/BimC subfamily.

Its subcellular location is the cytoplasm. The protein localises to the cytoskeleton. The protein resides in the spindle. Responsible for microtubule translocation. May be important for the organization of phragmoplast-specific arrays of microtubules. Plays an essential role in stabilizing the mitotic spindle. Required during mitotic cytokinesis. This is Kinesin-like protein KIN-5C from Arabidopsis thaliana (Mouse-ear cress).